The sequence spans 205 residues: Ribosome maturation factor RimP (205 aa).

This sequence belongs to the RimP family.

Its subcellular location is the cytoplasm. Its function is as follows. Required for maturation of 30S ribosomal subunits. The polypeptide is Ribosome maturation factor RimP (Sinorhizobium fredii (strain NBRC 101917 / NGR234)).